A 355-amino-acid polypeptide reads, in one-letter code: Uroporphyrinogen decarboxylase (355 aa).

Substrate-binding positions include 27–31 (RQAGR), Asp-78, Tyr-155, Ser-210, and His-328.

The protein belongs to the uroporphyrinogen decarboxylase family. As to quaternary structure, homodimer.

Its subcellular location is the cytoplasm. It catalyses the reaction uroporphyrinogen III + 4 H(+) = coproporphyrinogen III + 4 CO2. It participates in porphyrin-containing compound metabolism; protoporphyrin-IX biosynthesis; coproporphyrinogen-III from 5-aminolevulinate: step 4/4. Catalyzes the decarboxylation of four acetate groups of uroporphyrinogen-III to yield coproporphyrinogen-III. The polypeptide is Uroporphyrinogen decarboxylase (Pseudomonas aeruginosa (strain LESB58)).